The following is a 501-amino-acid chain: Protein disulfide isomerase-like 1-1 (501 aa).

Positions 1–23 are cleaved as a signal peptide; it reads MAMRGFTLFSILVLSLCASSIRS. The region spanning 24–141 is the Thioredoxin 1 domain; sequence EETETKEFVL…IVTYLKKQSG (118 aa). N-linked (GlcNAc...) asparagine glycosylation is present at Asn-39. Catalysis depends on nucleophile residues Cys-59 and Cys-62. Cys-59 and Cys-62 form a disulfide bridge. Asn-275 is a glycosylation site (N-linked (GlcNAc...) asparagine). One can recognise a Thioredoxin 2 domain in the interval 354–482; it reads FKDGKIAPHK…FISFVDKNKD (129 aa). Active-site nucleophile residues include Cys-404 and Cys-407. Cys-404 and Cys-407 form a disulfide bridge. The Prevents secretion from ER signature appears at 498–501; the sequence is KDEL.

This sequence belongs to the protein disulfide isomerase family. In terms of assembly, interacts with RD21A, At3g19390, At5g43060. Highly expressed in flowers, stems and immature seeds, and at lower levels in leaves and siliques (at protein level).

The protein resides in the endoplasmic reticulum lumen. It localises to the vacuole. It catalyses the reaction Catalyzes the rearrangement of -S-S- bonds in proteins.. Protein disulfide isomerase that associates with RD21A protease for trafficking from the ER through the Golgi to lytic and protein storage vacuoles of endothelial cells in developing seeds. Regulates the timing of programmed cell death (PCD) of the endothelial cells by chaperoning and inhibiting cysteine proteases during their trafficking to vacuoles. This is Protein disulfide isomerase-like 1-1 (PDIL1-1) from Arabidopsis thaliana (Mouse-ear cress).